Here is a 105-residue protein sequence, read N- to C-terminus: Antithrombin-III (105 aa).

A signal peptide spans 1-17 (MHLFIGVSLRPLGHGIP). A disordered region spans residues 38 to 105 (ICIYRNPEKK…MRRTSSCRPS (68 aa)). A compositionally biased stretch (basic and acidic residues) spans 43–53 (NPEKKPQERRG).

Belongs to the serpin family. Forms protease inhibiting heterodimer with TMPRSS7. In terms of tissue distribution, plasma.

It is found in the secreted. The protein localises to the extracellular space. In terms of biological role, most important serine protease inhibitor in plasma that regulates the blood coagulation cascade. AT-III inhibits thrombin, matriptase-3/TMPRSS7, as well as factors IXa, Xa and XIa. Its inhibitory activity is greatly enhanced in the presence of heparin. The polypeptide is Antithrombin-III (SERPINC1) (Gallus gallus (Chicken)).